Here is a 553-residue protein sequence, read N- to C-terminus: Glutamine--tRNA ligase (553 aa).

Residues 34–44 (PEPNGYLHIGH) carry the 'HIGH' region motif. ATP is bound by residues 35–37 (EPN) and 41–47 (HIGHAKS). The L-glutamine site is built by aspartate 67 and tyrosine 212. Residues threonine 231, 261–262 (RL), and 269–271 (MSK) contribute to the ATP site. The 'KMSKS' region motif lies at 268–272 (IMSKR).

This sequence belongs to the class-I aminoacyl-tRNA synthetase family. Monomer.

Its subcellular location is the cytoplasm. It carries out the reaction tRNA(Gln) + L-glutamine + ATP = L-glutaminyl-tRNA(Gln) + AMP + diphosphate. This is Glutamine--tRNA ligase from Tolumonas auensis (strain DSM 9187 / NBRC 110442 / TA 4).